The sequence spans 543 residues: CTP synthase (543 aa).

An amidoligase domain region spans residues 1–265 (MTKFIFVTGG…DRLVTDRFRI (265 aa)). Position 13 (Ser13) interacts with CTP. Ser13 lines the UTP pocket. ATP-binding positions include 14–19 (SLGKGI) and Asp71. Mg(2+) is bound by residues Asp71 and Glu139. CTP contacts are provided by residues 146-148 (DIE), 186-191 (KTKPTQ), and Lys222. UTP contacts are provided by residues 186-191 (KTKPTQ) and Lys222. In terms of domain architecture, Glutamine amidotransferase type-1 spans 290-541 (EIAMVGKYVD…VEAASQHKQT (252 aa)). Gly351 serves as a coordination point for L-glutamine. Cys378 functions as the Nucleophile; for glutamine hydrolysis in the catalytic mechanism. L-glutamine-binding positions include 379-382 (LGMQ), Glu402, and Arg469. Catalysis depends on residues His514 and Glu516.

The protein belongs to the CTP synthase family. As to quaternary structure, homotetramer.

It catalyses the reaction UTP + L-glutamine + ATP + H2O = CTP + L-glutamate + ADP + phosphate + 2 H(+). It carries out the reaction L-glutamine + H2O = L-glutamate + NH4(+). The enzyme catalyses UTP + NH4(+) + ATP = CTP + ADP + phosphate + 2 H(+). The protein operates within pyrimidine metabolism; CTP biosynthesis via de novo pathway; CTP from UDP: step 2/2. With respect to regulation, allosterically activated by GTP, when glutamine is the substrate; GTP has no effect on the reaction when ammonia is the substrate. The allosteric effector GTP functions by stabilizing the protein conformation that binds the tetrahedral intermediate(s) formed during glutamine hydrolysis. Inhibited by the product CTP, via allosteric rather than competitive inhibition. Catalyzes the ATP-dependent amination of UTP to CTP with either L-glutamine or ammonia as the source of nitrogen. Regulates intracellular CTP levels through interactions with the four ribonucleotide triphosphates. This is CTP synthase from Hydrogenovibrio crunogenus (strain DSM 25203 / XCL-2) (Thiomicrospira crunogena).